We begin with the raw amino-acid sequence, 344 residues long: Dihydroorotase (344 aa).

Zn(2+)-binding residues include H14 and H16. Residues 16 to 18 (HFR) and N42 each bind substrate. The Zn(2+) site is built by K100, H137, and H175. An N6-carboxylysine modification is found at K100. H137 contacts substrate. Substrate is bound at residue L220. D248 contacts Zn(2+). The active site involves D248. Substrate-binding residues include H252 and A264.

The protein belongs to the metallo-dependent hydrolases superfamily. DHOase family. Class II DHOase subfamily. In terms of assembly, homodimer. Zn(2+) serves as cofactor.

The catalysed reaction is (S)-dihydroorotate + H2O = N-carbamoyl-L-aspartate + H(+). The protein operates within pyrimidine metabolism; UMP biosynthesis via de novo pathway; (S)-dihydroorotate from bicarbonate: step 3/3. Catalyzes the reversible cyclization of carbamoyl aspartate to dihydroorotate. The protein is Dihydroorotase of Alcanivorax borkumensis (strain ATCC 700651 / DSM 11573 / NCIMB 13689 / SK2).